The sequence spans 75 residues: DNA-directed RNA polymerase subunit omega (75 aa).

It belongs to the RNA polymerase subunit omega family. As to quaternary structure, the RNAP catalytic core consists of 2 alpha, 1 beta, 1 beta' and 1 omega subunit. When a sigma factor is associated with the core the holoenzyme is formed, which can initiate transcription.

The catalysed reaction is RNA(n) + a ribonucleoside 5'-triphosphate = RNA(n+1) + diphosphate. In terms of biological role, promotes RNA polymerase assembly. Latches the N- and C-terminal regions of the beta' subunit thereby facilitating its interaction with the beta and alpha subunits. This is DNA-directed RNA polymerase subunit omega from Thermosipho melanesiensis (strain DSM 12029 / CIP 104789 / BI429).